The primary structure comprises 112 residues: Type III inner-rod protein PscI (112 aa).

This sequence belongs to the YscI/HrpB family. Homomultimer (through its C-terminal region).

Its function is as follows. Component of the type III secretion (T3S) injectisome that translocates effector toxins into host cells, facilitating the establishment and dissemination of infection. Polymerizes into flexible and regularly twisted fibrils and plays an essential role in needle assembly. The protein is Type III inner-rod protein PscI (pscI) of Pseudomonas aeruginosa (strain ATCC 15692 / DSM 22644 / CIP 104116 / JCM 14847 / LMG 12228 / 1C / PRS 101 / PAO1).